We begin with the raw amino-acid sequence, 373 residues long: MNVIDLSDPAINVDYDSLIGIDNEESQEIFENEVKEDGQQEEQEEASSRKDGLIVEPGRDVESLRRAIRDQLLFKIHRQNQSDCADARKLSNDEEDESRQQKLERIREELEELKIENLTSEMQTEIKELCEIQSKLATESSSRLTNLRKKLLETYEGQDTVILPNIILDTSNIKRLQKLDQKISLMERFVGIPEALEAEEDRKSVHSKVNELYRSIQLLQGDDKAEGKLQKFRDRLVELNEEFENSLLGKKIQQDLRLKDDTVSKLVMPENKVKEINSMYSMFKQYQDSLPLLAERMKSLNKMNNRVIEVYETTKGLDSQITSIQEQGKVWLKALNELDKKFDEQEVKIRENMEQIRRKIDTLEDEALQRNSK.

A disordered region spans residues 33–53 (EVKEDGQQEEQEEASSRKDGL). Ser91 bears the Phosphoserine mark. 3 coiled-coil regions span residues 114–139 (KIEN…LATE), 200–245 (EDRK…EFEN), and 331–367 (WLKA…EDEA).

In terms of assembly, component of the dynactin complex composed of at least ARP1, JNM1, NIP100 and ARP10. Dynactin comprises a short rod of ARP1 polymers attached to ARP10 at its pointed-end and probably associated with the capping protein at its barbed-end. The rod structure is implicated in dynein cargo binding. A sidearm formed by NIP100 projects from the ARP1 filament and is implicated in motor binding. Interacts with ARP1.

The protein localises to the cytoplasm. The protein resides in the cytoskeleton. In terms of biological role, component of the dynactin complex which assists cytoplasmic dynein by increasing its processivity and by regulation of its cargo binding. The dynactin complex is required for the spindle translocation late in anaphase and is involved in a cell wall synthesis checkpoint. JNM1 is associated with the rod and links it to the projecting sidearm. Required for proper nuclear migration during the mitotic cell cycle and for astral microtubule development. This is Nuclear migration protein JNM1 (JNM1) from Saccharomyces cerevisiae (strain ATCC 204508 / S288c) (Baker's yeast).